The primary structure comprises 405 residues: Cytoplasmic tRNA 2-thiolation protein 2 (405 aa).

This sequence belongs to the CTU2/NCS2 family.

The protein localises to the cytoplasm. It functions in the pathway tRNA modification; 5-methoxycarbonylmethyl-2-thiouridine-tRNA biosynthesis. Plays a central role in 2-thiolation of mcm(5)S(2)U at tRNA wobble positions of tRNA(Lys), tRNA(Glu) and tRNA(Gln). May act by forming a heterodimer with NCS6/CTU1 that ligates sulfur from thiocarboxylated URM1 onto the uridine of tRNAs at wobble position. This is Cytoplasmic tRNA 2-thiolation protein 2 from Drosophila persimilis (Fruit fly).